The chain runs to 531 residues: Galactose/methyl galactoside import permease protein MglC (531 aa).

The next 10 membrane-spanning stretches (helical) occupy residues 193-213, 239-259, 267-287, 300-320, 326-346, 376-396, 424-444, 461-481, 483-503, and 505-525; these read FFLA…CIVV, MFYA…LSIG, VVTG…GLGP, VMSL…AGFF, IHPF…LFFG, LVTF…AWFI, FGVT…GAFF, LDAI…IGKL, GAVV…FLGI, and TNLQ…LDSV.

It belongs to the binding-protein-dependent transport system permease family. AraH/RbsC subfamily. As to quaternary structure, the complex is composed of one ATP-binding protein (MglA), two transmembrane proteins (MglC) and a solute-binding protein (MglB).

The protein localises to the cell membrane. Part of the ABC transporter complex MglABC involved in galactose/methyl galactoside import. Probably responsible for the translocation of the substrate across the membrane. The sequence is that of Galactose/methyl galactoside import permease protein MglC (mglC) from Treponema pallidum (strain Nichols).